A 188-amino-acid polypeptide reads, in one-letter code: HTH-type transcriptional repressor AcnR (188 aa).

One can recognise an HTH tetR-type domain in the interval 10–70; it reads VNSRQEILEG…ALAREDAARM (61 aa). Residues 33-52 constitute a DNA-binding region (H-T-H motif); sequence TVRRLEEATGKSRGAIFHHF. Citrate-binding positions include 79 to 80, arginine 130, and asparagine 134; that span reads LV. Glutamate 181 contacts Mg(2+). Position 185 (arginine 185) interacts with citrate.

In terms of assembly, homodimer.

Functionally, acnR negatively controls the expression of the aconitase gene acn. The chain is HTH-type transcriptional repressor AcnR from Corynebacterium efficiens (strain DSM 44549 / YS-314 / AJ 12310 / JCM 11189 / NBRC 100395).